Reading from the N-terminus, the 22-residue chain is FIHHIFRGIVHAGRSIGRFLTG.

G22 is modified (glycine amide).

The protein belongs to the pleurocidin family. As to expression, mast cells in gill, skin and gut, and in lining blood vessels in the viscera.

The protein resides in the secreted. Its subcellular location is the membrane. Functionally, antimicrobial peptide with broad-spectrum activity against Gram-positive and Gram-negative bacteria. Rapidly inactivates both channel catfish herpesvirus (ED(50)=11 uM) and frog virus 3 (ED(50)=16 uM) over a wide temperature range. Has hemolytic activity. The sequence is that of Piscidin-3 from Morone chrysops x Morone saxatilis (White bass x Striped bass).